We begin with the raw amino-acid sequence, 665 residues long: Pentatricopeptide repeat-containing protein At1g04840 (665 aa).

11 PPR repeats span residues asparagine 90–proline 124, aspartate 125–asparagine 155, aspartate 160–arginine 190, serine 195–serine 229, tryptophan 230–lysine 256, asparagine 257–proline 291, asparagine 292–leucine 326, aspartate 327–lysine 357, aspartate 358–proline 392, aspartate 393–aspartate 423, and threonine 429–asparagine 459. The interval threonine 464–aspartate 539 is type E motif. Residues glycine 540–isoleucine 570 form a type E(+) motif region. The segment at glutamine 571–tryptophan 665 is type DYW motif.

This sequence belongs to the PPR family. PCMP-H subfamily.

This chain is Pentatricopeptide repeat-containing protein At1g04840 (PCMP-H64), found in Arabidopsis thaliana (Mouse-ear cress).